The chain runs to 740 residues: ATP-dependent RNA helicase DDX1 (740 aa).

The necessary for interaction with HNRNPK stretch occupies residues 1-295; the sequence is MAAFSEMGVM…APKALIVEPS (295 aa). The segment at 1–448 is interaction with dsRNA; sequence MAAFSEMGVM…DTVHHVVVPV (448 aa). Residues 1 to 525 are necessary for interaction with RELA; it reads MAAFSEMGVM…KIDCDNLEQY (525 aa). Residues 2 to 428 form the Helicase ATP-binding domain; the sequence is AAFSEMGVMP…SEKIMHFPTW (427 aa). 46–53 contacts ATP; sequence AETGSGKT. Positions 70-247 constitute a B30.2/SPRY domain; sequence DQQEGKKGKA…LKFNFGEEEF (178 aa). 2 positions are modified to N6-acetyllysine: Lys239 and Lys268. Lys281 carries the post-translational modification N6-acetyllysine; alternate. Residue Lys281 forms a Glycyl lysine isopeptide (Lys-Gly) (interchain with G-Cter in SUMO2); alternate linkage. The DEAD box motif lies at 370–373; sequence DEAD. Phosphoserine is present on Ser481. Residues 493–681 enclose the Helicase C-terminal domain; sequence KGEYAVRAIK…QVEPDIKVPV (189 aa). Residues 525–740 are necessary for interaction with HNRNPK; that stretch reads YFMQQGGGPD…YLPNQLFRTF (216 aa).

It belongs to the DEAD box helicase family. DDX1 subfamily. In terms of assembly, found in a multi-helicase-TICAM1 complex at least composed of DHX36, DDX1, DDX21 and TICAM1; this complex exists in resting cells with or without poly(I:C) RNA ligand stimulation. Interacts with DHX36. Interacts (via B30.2/SPRY domain) with DDX21 (via N-terminus); this interaction serves as bridges to TICAM1. Interacts with FAM98A (via N- and C-terminus). Interacts with PHF5A (via C-terminus). Interacts with MBNL1. Interacts with CSTF2. Interacts with HNRNPK. Interacts with ATM. Interacts with RELA (via C-terminus). Component of the tRNA-splicing ligase complex. Interacts with PQBP1. Interacts with ERCC6. Post-translationally, phosphorylated by ATM kinase; phosphorylation is increased in response to ionizing radiation (IR).

It localises to the nucleus. The protein localises to the cytoplasm. The protein resides in the cytoplasmic granule. It is found in the cytosol. Its subcellular location is the mitochondrion. The catalysed reaction is ATP + H2O = ADP + phosphate + H(+). Acts as an ATP-dependent RNA helicase, able to unwind both RNA-RNA and RNA-DNA duplexes. Possesses 5' single-stranded RNA overhang nuclease activity. Possesses ATPase activity on various RNA, but not DNA polynucleotides. May play a role in RNA clearance at DNA double-strand breaks (DSBs), thereby facilitating the template-guided repair of transcriptionally active regions of the genome. Together with RELA, acts as a coactivator to enhance NF-kappa-B-mediated transcriptional activation. Acts as a positive transcriptional regulator of cyclin CCND2 expression. Binds to the cyclin CCND2 promoter region. Associates with chromatin at the NF-kappa-B promoter region via association with RELA. Binds to poly(A) RNA. May be involved in 3'-end cleavage and polyadenylation of pre-mRNAs. Component of the tRNA-splicing ligase complex required to facilitate the enzymatic turnover of catalytic subunit RTCB: together with archease (ZBTB8OS), acts by facilitating the guanylylation of RTCB, a key intermediate step in tRNA ligation. Component of a multi-helicase-TICAM1 complex that acts as a cytoplasmic sensor of viral double-stranded RNA (dsRNA) and plays a role in the activation of a cascade of antiviral responses including the induction of pro-inflammatory cytokines via the adapter molecule TICAM1. Specifically binds (via helicase ATP-binding domain) on both short and long poly(I:C) dsRNA. The protein is ATP-dependent RNA helicase DDX1 (Ddx1) of Rattus norvegicus (Rat).